The following is a 439-amino-acid chain: Histidine--tRNA ligase (439 aa).

It belongs to the class-II aminoacyl-tRNA synthetase family. Homodimer.

It localises to the cytoplasm. It catalyses the reaction tRNA(His) + L-histidine + ATP = L-histidyl-tRNA(His) + AMP + diphosphate + H(+). This chain is Histidine--tRNA ligase, found in Clostridium tetani (strain Massachusetts / E88).